The sequence spans 252 residues: Small ribosomal subunit protein eS1B (252 aa).

An N-acetylalanine; partial modification is found at A2. Residue S251 is modified to Phosphoserine.

Belongs to the eukaryotic ribosomal protein eS1 family. Component of the small ribosomal subunit (SSU). Mature yeast ribosomes consist of a small (40S) and a large (60S) subunit. The 40S small subunit contains 1 molecule of ribosomal RNA (18S rRNA) and at least 33 different proteins. The large 60S subunit contains 3 rRNA molecules (25S, 5.8S and 5S rRNA) and at least 46 different proteins. eS1 interacts directly with uS11 and eS26, which form part of the mRNA exit tunnel.

It localises to the cytoplasm. Functionally, component of the ribosome, a large ribonucleoprotein complex responsible for the synthesis of proteins in the cell. The small ribosomal subunit (SSU) binds messenger RNAs (mRNAs) and translates the encoded message by selecting cognate aminoacyl-transfer RNA (tRNA) molecules. The large subunit (LSU) contains the ribosomal catalytic site termed the peptidyl transferase center (PTC), which catalyzes the formation of peptide bonds, thereby polymerizing the amino acids delivered by tRNAs into a polypeptide chain. The nascent polypeptides leave the ribosome through a tunnel in the LSU and interact with protein factors that function in enzymatic processing, targeting, and the membrane insertion of nascent chains at the exit of the ribosomal tunnel. This chain is Small ribosomal subunit protein eS1B (rps102), found in Schizosaccharomyces pombe (strain 972 / ATCC 24843) (Fission yeast).